The chain runs to 321 residues: Biotin synthase (321 aa).

A Radical SAM core domain is found at 45–271 (YYGKKVKLNM…INPTKEIRIA (227 aa)). C63, C67, and C70 together coordinate [4Fe-4S] cluster. 4 residues coordinate [2Fe-2S] cluster: C106, C139, C199, and R269.

This sequence belongs to the radical SAM superfamily. Biotin synthase family. Homodimer. Requires [4Fe-4S] cluster as cofactor. It depends on [2Fe-2S] cluster as a cofactor.

It catalyses the reaction (4R,5S)-dethiobiotin + (sulfur carrier)-SH + 2 reduced [2Fe-2S]-[ferredoxin] + 2 S-adenosyl-L-methionine = (sulfur carrier)-H + biotin + 2 5'-deoxyadenosine + 2 L-methionine + 2 oxidized [2Fe-2S]-[ferredoxin]. It functions in the pathway cofactor biosynthesis; biotin biosynthesis; biotin from 7,8-diaminononanoate: step 2/2. Its function is as follows. Catalyzes the conversion of dethiobiotin (DTB) to biotin by the insertion of a sulfur atom into dethiobiotin via a radical-based mechanism. This chain is Biotin synthase, found in Staphylococcus epidermidis (strain ATCC 35984 / DSM 28319 / BCRC 17069 / CCUG 31568 / BM 3577 / RP62A).